Consider the following 167-residue polypeptide: uncharacterized protein (167 aa).

Residues 1–23 (MKRLHKRFLLATFCALFTATLQA) form the signal peptide. Cys-39 and Cys-77 are joined by a disulfide.

This sequence belongs to the fimbrial protein family.

It localises to the fimbrium. This is an uncharacterized protein from Escherichia coli (strain K12).